Consider the following 916-residue polypeptide: Protein prickle (916 aa).

Disordered regions lie at residues 49–105 and 127–176; these read PLSP…AGGS and QHLQ…IPVD. The segment covering 145-156 has biased composition (low complexity); the sequence is SSPSPALSSSIT. The span at 157–171 shows a compositional bias: gly residues; sequence TGGGGVTRGGGGGGH. Residues 167–275 enclose the PET domain; it reads GGGGHIIPVD…TVKQLATNQI (109 aa). LIM zinc-binding domains are found at residues 274–338, 339–399, and 400–462; these read QICD…ETLK, PRCS…MFAE, and YCDF…GEPP. Disordered regions lie at residues 460-593, 635-671, 692-725, and 763-870; these read EPPT…PNHR, VIPG…QPQS, DAIQ…ENLP, and RSKS…DTVY. Composition is skewed to polar residues over residues 507–517, 526–569, and 642–654; these read SPISERSTPHS, EMST…SRTL, and AKTN…SMPE. Low complexity predominate over residues 655–671; it reads LSQSLQQQQQQQQQPQS. Over residues 777–793 the composition is skewed to basic residues; that stretch reads RSSKSKRRSSHHHQHHR. Low complexity predominate over residues 796–805; sequence GESSSYSGTS. Over residues 829-844 the composition is skewed to basic and acidic residues; it reads VPDVEFIEHQDHHRGD. Over residues 852 to 867 the composition is skewed to low complexity; sequence RSVCSTCSSSSSSADD.

Belongs to the prickle / espinas / testin family. As to quaternary structure, interacts with dsh; PET and LIM domains interact with dsh DEP domain, in wing cells. Interacts with Vang in photoreceptor cells.

It is found in the cell membrane. Acts in a planar cell polarity (PCP) complex; polarization along the apical/basal axis of epithelial cells. PCP signaling in the wing disk requires the receptor fz and the cytoplasmic proteins dsh and pk. These act in a feedback loop leading to activation of the jnk cascade and subsequent polarized arrangement of hairs and bristles. Dgo and pk compete with one another for dsh binding, thereby modulating fz dsh activity and ensuring tight control over fz PCP signaling. Vang, stan and pk function together to regulate the establishment of tissue polarity in the adult eye. This chain is Protein prickle, found in Aedes aegypti (Yellowfever mosquito).